A 399-amino-acid polypeptide reads, in one-letter code: Chromosomal replication initiator protein DnaA (399 aa).

Residues Met-1–Val-64 form a domain I, interacts with DnaA modulators region. A domain II region spans residues Val-64–Asp-77. Positions Phe-78 to Gly-290 are domain III, AAA+ region. ADP-binding residues include Ile-89, Asn-94, Gly-122, Thr-123, Gly-124, Lys-125, Thr-126, and His-127. An ATP-binding site is contributed by Ile-89. Gly-122 contributes to the ATP binding site. ATP-binding residues include Gly-124, Lys-125, Thr-126, and His-127. Thr-126 lines the Mg(2+) pocket. Val-156 contributes to the ssDNA binding site. ATP is bound at residue Asp-180. Asp-181 serves as a coordination point for Mg(2+). Positions 188, 190, and 191 each coordinate ssDNA. Arg-277 provides a ligand contact to ATP. A domain IV, binds dsDNA region spans residues Phe-291–Cys-399.

The protein belongs to the DnaA family. In the presence of ATP analog AMP-PCP forms a linear, right-handed spiral filament with 4 subunits arranged head-to-tail, about 122 Angstroms wide and about 360 Angstroms long. Mg(2+)-AMP-PCP binds at the subunit interface with the gamma phosphate coordinated by adjacent subunits. dsDNA probably wraps on the outside of the filament. ssDNA binds to the center of the helical filament via the AAA+ domain, which stretches the DNA.

It is found in the cytoplasm. Functionally, plays an essential role in the initiation and regulation of chromosomal replication. ATP-DnaA binds to the origin of replication (oriC) to initiate formation of the DNA replication initiation complex once per cell cycle. Binds the DnaA box (a 9 base pair repeat at the origin) and separates the double-stranded (ds)DNA. Forms a right-handed helical filament on oriC DNA; dsDNA binds to the exterior of the filament while single-stranded (ss)DNA is stabiized in the filament's interior. The ATP-DnaA-oriC complex binds and stabilizes one strand of the AT-rich DNA unwinding element (DUE), permitting loading of DNA polymerase. After initiation quickly degrades to an ADP-DnaA complex that is not apt for DNA replication. Binds acidic phospholipids. Able to melt short unstable dsDNA (15-mer with melting temperature, TM, 43 degrees Celsius) in the presence of a non-hydrolyzable ATP analog; a more stable dsDNA (20-mer, TM 55 degrees Celsius) is poor substrate. ADP does not support dsDNA melting. Addition of DnaA-AMP-PCP (an ATP analog, beta,gamma-methyleneadenosine 5'-triphosphate) to an oric-containing plasmid causes a DNA shift to more positively supercoiled topological species, stabilizing a positive wrap and right-handed filament as seen in the crystal structure without DNA. Filament formation generated by positive supercoiling may destabilize the origin unwinding element through compensatory negative supercoiling strain. This is Chromosomal replication initiator protein DnaA from Aquifex aeolicus (strain VF5).